The chain runs to 175 residues: NADH-quinone oxidoreductase subunit I (175 aa).

4Fe-4S ferredoxin-type domains follow at residues 64–93 and 110–139; these read KRDE…IIAD and SLYE…LTEE. C73, C76, C79, C83, C119, C122, C125, and C129 together coordinate [4Fe-4S] cluster.

The protein belongs to the complex I 23 kDa subunit family. As to quaternary structure, NDH-1 is composed of 14 different subunits. Subunits NuoA, H, J, K, L, M, N constitute the membrane sector of the complex. The cofactor is [4Fe-4S] cluster.

The protein localises to the cell inner membrane. The enzyme catalyses a quinone + NADH + 5 H(+)(in) = a quinol + NAD(+) + 4 H(+)(out). Functionally, NDH-1 shuttles electrons from NADH, via FMN and iron-sulfur (Fe-S) centers, to quinones in the respiratory chain. The immediate electron acceptor for the enzyme in this species is believed to be ubiquinone. Couples the redox reaction to proton translocation (for every two electrons transferred, four hydrogen ions are translocated across the cytoplasmic membrane), and thus conserves the redox energy in a proton gradient. This Cytophaga hutchinsonii (strain ATCC 33406 / DSM 1761 / CIP 103989 / NBRC 15051 / NCIMB 9469 / D465) protein is NADH-quinone oxidoreductase subunit I.